Here is a 172-residue protein sequence, read N- to C-terminus: Peptide methionine sulfoxide reductase MsrA 1 (172 aa).

The active site involves Cys14.

This sequence belongs to the MsrA Met sulfoxide reductase family.

It carries out the reaction L-methionyl-[protein] + [thioredoxin]-disulfide + H2O = L-methionyl-(S)-S-oxide-[protein] + [thioredoxin]-dithiol. It catalyses the reaction [thioredoxin]-disulfide + L-methionine + H2O = L-methionine (S)-S-oxide + [thioredoxin]-dithiol. Functionally, has an important function as a repair enzyme for proteins that have been inactivated by oxidation. Catalyzes the reversible oxidation-reduction of methionine sulfoxide in proteins to methionine. In Mesorhizobium japonicum (strain LMG 29417 / CECT 9101 / MAFF 303099) (Mesorhizobium loti (strain MAFF 303099)), this protein is Peptide methionine sulfoxide reductase MsrA 1 (msrA1).